The chain runs to 309 residues: uncharacterized protein (309 aa).

One can recognise an RPE1 insert domain in the interval 9-55 (NFLYNIANKDGFKGYKECRTSAYKNVFDDSSTKSTSKFHLGISDTKN). A helical transmembrane segment spans residues 62–82 (IIGLILIIFAGVLFYAYILQH).

The protein belongs to the LicD transferase family.

It is found in the membrane. This is an uncharacterized protein from Rickettsia typhi (strain ATCC VR-144 / Wilmington).